Here is a 307-residue protein sequence, read N- to C-terminus: Tyrosine recombinase XerC (307 aa).

The Core-binding (CB) domain maps to 9-95 (ETLSLAIDSF…ALRSFLDWQV (87 aa)). A Tyr recombinase domain is found at 116-296 (HLPKNMDVDE…DFQHLAKVYD (181 aa)). Active-site residues include Arg155, Lys179, His248, Arg251, and His274. Tyr283 (O-(3'-phospho-DNA)-tyrosine intermediate) is an active-site residue.

It belongs to the 'phage' integrase family. XerC subfamily. Forms a cyclic heterotetrameric complex composed of two molecules of XerC and two molecules of XerD, in which XerC interacts with XerD via its C-terminal region, XerD interacts with XerC via its C-terminal region and so on.

It localises to the cytoplasm. With respect to regulation, ftsK may regulate the catalytic switch between XerC and XerD in the heterotetrameric complex during the two steps of the recombination process. In terms of biological role, site-specific tyrosine recombinase, which acts by catalyzing the cutting and rejoining of the recombining DNA molecules. Binds cooperatively to specific DNA consensus sequences that are separated from XerD binding sites by a short central region, forming the heterotetrameric XerC-XerD complex that recombines DNA substrates. The complex is essential to convert dimers of the bacterial chromosome into monomers to permit their segregation at cell division. It also contributes to the segregational stability of plasmids. In the complex XerC specifically exchanges the top DNA strands. This chain is Tyrosine recombinase XerC, found in Proteus mirabilis.